A 296-amino-acid polypeptide reads, in one-letter code: Porphobilinogen deaminase (296 aa).

Residue cysteine 235 is modified to S-(dipyrrolylmethanemethyl)cysteine.

This sequence belongs to the HMBS family. Monomer. The cofactor is dipyrromethane.

The catalysed reaction is 4 porphobilinogen + H2O = hydroxymethylbilane + 4 NH4(+). It functions in the pathway porphyrin-containing compound metabolism; protoporphyrin-IX biosynthesis; coproporphyrinogen-III from 5-aminolevulinate: step 2/4. In terms of biological role, tetrapolymerization of the monopyrrole PBG into the hydroxymethylbilane pre-uroporphyrinogen in several discrete steps. The polypeptide is Porphobilinogen deaminase (Alkaliphilus oremlandii (strain OhILAs) (Clostridium oremlandii (strain OhILAs))).